We begin with the raw amino-acid sequence, 86 residues long: ATP synthase subunit c (86 aa).

The next 2 membrane-spanning stretches (helical) occupy residues 4–24 (AIVAAASAIGAGIAVATGIGA) and 57–77 (VAIAESSAIYGLVISIILLFV).

The protein belongs to the ATPase C chain family. As to quaternary structure, F-type ATPases have 2 components, F(1) - the catalytic core - and F(0) - the membrane proton channel. F(1) has five subunits: alpha(3), beta(3), gamma(1), delta(1), epsilon(1). F(0) has three main subunits: a(1), b(2) and c(10-14). The alpha and beta chains form an alternating ring which encloses part of the gamma chain. F(1) is attached to F(0) by a central stalk formed by the gamma and epsilon chains, while a peripheral stalk is formed by the delta and b chains.

The protein localises to the cell membrane. F(1)F(0) ATP synthase produces ATP from ADP in the presence of a proton or sodium gradient. F-type ATPases consist of two structural domains, F(1) containing the extramembraneous catalytic core and F(0) containing the membrane proton channel, linked together by a central stalk and a peripheral stalk. During catalysis, ATP synthesis in the catalytic domain of F(1) is coupled via a rotary mechanism of the central stalk subunits to proton translocation. Its function is as follows. Key component of the F(0) channel; it plays a direct role in translocation across the membrane. A homomeric c-ring of between 10-14 subunits forms the central stalk rotor element with the F(1) delta and epsilon subunits. This chain is ATP synthase subunit c, found in Clostridioides difficile (strain 630) (Peptoclostridium difficile).